A 436-amino-acid chain; its full sequence is Methionine aminopeptidase 2 (436 aa).

The tract at residues 1 to 61 is disordered; sequence MSEIQPKTEV…KKKKAAPVAS (61 aa). A compositionally biased stretch (acidic residues) spans 16 to 26; it reads EEEEESDDEED. Over residues 44–56 the composition is skewed to basic residues; the sequence is KKKKKKNKKKKKA. His-191 lines the substrate pocket. The a divalent metal cation site is built by Asp-211, Asp-222, and His-291. His-299 is a binding site for substrate. Residues Glu-324 and Glu-417 each coordinate a divalent metal cation.

This sequence belongs to the peptidase M24A family. Methionine aminopeptidase eukaryotic type 2 subfamily. Co(2+) serves as cofactor. It depends on Zn(2+) as a cofactor. Mn(2+) is required as a cofactor. The cofactor is Fe(2+).

It is found in the cytoplasm. The enzyme catalyses Release of N-terminal amino acids, preferentially methionine, from peptides and arylamides.. Cotranslationally removes the N-terminal methionine from nascent proteins. The N-terminal methionine is often cleaved when the second residue in the primary sequence is small and uncharged (Met-Ala-, Cys, Gly, Pro, Ser, Thr, or Val). The protein is Methionine aminopeptidase 2 (metap2) of Dictyostelium discoideum (Social amoeba).